The primary structure comprises 147 residues: UPF0178 protein CV_1768 (147 aa).

It belongs to the UPF0178 family.

The polypeptide is UPF0178 protein CV_1768 (Chromobacterium violaceum (strain ATCC 12472 / DSM 30191 / JCM 1249 / CCUG 213 / NBRC 12614 / NCIMB 9131 / NCTC 9757 / MK)).